A 329-amino-acid polypeptide reads, in one-letter code: Isopenicillin N synthase (329 aa).

The isopenicillin N site is built by Arg87, Tyr91, Ser183, and Tyr189. N-[(5S)-5-amino-5-carboxypentanoyl]-L-cysteinyl-D-valine is bound by residues Arg87, Tyr91, Ser183, Tyr189, His212, and Asp214. The Fe2OG dioxygenase domain maps to 180–286 (SLSSVSLIRY…RLSLPFFLNG (107 aa)). Fe(2+) is bound by residues His212, Asp214, and His268. Position 277 (Arg277) interacts with 2-oxoglutarate. Ser279 provides a ligand contact to isopenicillin N. Residue Ser279 coordinates N-[(5S)-5-amino-5-carboxypentanoyl]-L-cysteinyl-D-valine.

The protein belongs to the iron/ascorbate-dependent oxidoreductase family. It depends on Fe cation as a cofactor. Requires L-ascorbate as cofactor.

The enzyme catalyses N-[(5S)-5-amino-5-carboxypentanoyl]-L-cysteinyl-D-valine + O2 = isopenicillin N + 2 H2O. Its pathway is antibiotic biosynthesis; penicillin G biosynthesis; penicillin G from L-alpha-aminoadipate and L-cysteine and L-valine: step 2/3. In terms of biological role, removes, in the presence of oxygen, 4 hydrogen atoms from delta-L-(alpha-aminoadipyl)-L-cysteinyl-D-valine (ACV) to form the azetidinone and thiazolidine rings of isopenicillin. The polypeptide is Isopenicillin N synthase (pcbC) (Streptomyces clavuligerus).